The following is a 373-amino-acid chain: Chaperone protein DnaJ (373 aa).

Residues 4–68 (DFYEILGVSR…QARANYDRFG (65 aa)) enclose the J domain. The CR-type zinc-finger motif lies at 132 to 214 (GGEKEIRINH…CGGQGHIQVS (83 aa)). Zn(2+) is bound by residues C145, C148, C162, C165, C188, C191, C202, and C205. CXXCXGXG motif repeat units follow at residues 145 to 152 (CKTCQGTG), 162 to 169 (CSTCGGVG), 188 to 195 (CPTCGGSG), and 202 to 209 (CESCGGQG).

Belongs to the DnaJ family. Homodimer. Zn(2+) serves as cofactor.

The protein resides in the cytoplasm. Its function is as follows. Participates actively in the response to hyperosmotic and heat shock by preventing the aggregation of stress-denatured proteins and by disaggregating proteins, also in an autonomous, DnaK-independent fashion. Unfolded proteins bind initially to DnaJ; upon interaction with the DnaJ-bound protein, DnaK hydrolyzes its bound ATP, resulting in the formation of a stable complex. GrpE releases ADP from DnaK; ATP binding to DnaK triggers the release of the substrate protein, thus completing the reaction cycle. Several rounds of ATP-dependent interactions between DnaJ, DnaK and GrpE are required for fully efficient folding. Also involved, together with DnaK and GrpE, in the DNA replication of plasmids through activation of initiation proteins. The sequence is that of Chaperone protein DnaJ from Thermosynechococcus vestitus (strain NIES-2133 / IAM M-273 / BP-1).